Consider the following 624-residue polypeptide: Polycomb group protein EMF2A (624 aa).

The segment at 338–359 (CPFCLVRCGNFKGLECHMTSSH) adopts a C2H2-type zinc-finger fold. Residues 420-445 (DAHIMESGSPEETQAESEDDVQEENE) form a disordered region. The span at 432 to 445 (TQAESEDDVQEENE) shows a compositional bias: acidic residues. Residues 474–609 (LSANRADPRN…SARTMDTCNR (136 aa)) form a VEFS-box region.

This sequence belongs to the VEFS (VRN2-EMF2-FIS2-SU(Z)12) family. In terms of assembly, component of the polycomb repressive complex 2 (PRC2), which methylates 'Lys-27' residues of histone H3 (H3K27me3), leading to transcriptional repression of the affected target gene. In terms of tissue distribution, widely expressed. Highly expressed in shoot apical meristem and inflorescence meristem. Expressed in roots, leaves and immature seeds.

In terms of biological role, polycomb group (PcG) protein. PcG proteins act by forming multiprotein complexes, which are required to maintain the transcriptionally repressive state of homeotic genes throughout development. PcG proteins are not required to initiate repression, but to maintain it during later stages of development. They act via the methylation of histones, rendering chromatin heritably changed in its expressibility. The sequence is that of Polycomb group protein EMF2A from Oryza sativa subsp. japonica (Rice).